The sequence spans 177 residues: Large ribosomal subunit protein uL6 (177 aa).

The protein belongs to the universal ribosomal protein uL6 family. In terms of assembly, part of the 50S ribosomal subunit.

In terms of biological role, this protein binds to the 23S rRNA, and is important in its secondary structure. It is located near the subunit interface in the base of the L7/L12 stalk, and near the tRNA binding site of the peptidyltransferase center. In Methanococcoides burtonii (strain DSM 6242 / NBRC 107633 / OCM 468 / ACE-M), this protein is Large ribosomal subunit protein uL6.